The following is a 455-amino-acid chain: Argininosuccinate lyase (455 aa).

This sequence belongs to the lyase 1 family. Argininosuccinate lyase subfamily.

The protein localises to the cytoplasm. The enzyme catalyses 2-(N(omega)-L-arginino)succinate = fumarate + L-arginine. It functions in the pathway amino-acid biosynthesis; L-arginine biosynthesis; L-arginine from L-ornithine and carbamoyl phosphate: step 3/3. The polypeptide is Argininosuccinate lyase (Roseiflexus castenholzii (strain DSM 13941 / HLO8)).